The primary structure comprises 186 residues: Transcription factor FapR (186 aa).

It belongs to the FapR family.

Functionally, transcriptional factor involved in regulation of membrane lipid biosynthesis by repressing genes involved in fatty acid and phospholipid metabolism. This is Transcription factor FapR from Staphylococcus epidermidis (strain ATCC 35984 / DSM 28319 / BCRC 17069 / CCUG 31568 / BM 3577 / RP62A).